Reading from the N-terminus, the 374-residue chain is LRR repeats and ubiquitin-like domain-containing protein At2g30105 (374 aa).

In terms of domain architecture, Ubiquitin-like spans 13 to 87 (IKLTVKFGGK…LMLMASQGLH (75 aa)). 9 LRR repeats span residues 128–151 (WKATGVIALAQANLKEIPEEVWDC), 152–175 (GSGVRVLDISENFIKEVPAKISSF), 177–200 (SMQKLFLQGNGLSDESIQWEGIAS), 201–224 (LKRLMLLSISHNNLTVLPSAMGSL), 225–248 (TSLRQLDVTNNKLTSLPNELGLLT), 250–270 (LEILKANNNRITSLPESIGNC), 272–293 (FLMEVDLSANIISELPETFTKL), 294–316 (RNLKTLELNNTGLKTLPSALFKM), and 318–340 (LQLSTLGLHNTEITVEFLRQFEG).

This chain is LRR repeats and ubiquitin-like domain-containing protein At2g30105, found in Arabidopsis thaliana (Mouse-ear cress).